Consider the following 341-residue polypeptide: Undecaprenyl-phosphate 4-deoxy-4-formamido-L-arabinose transferase (341 aa).

The next 2 membrane-spanning stretches (helical) occupy residues 235–255 and 269–289; these read LSIVGFSLAALGMLFAFALIV and LFVLFAVLFVFTGGQFIGMGL.

This sequence belongs to the glycosyltransferase 2 family.

The protein localises to the cell inner membrane. The enzyme catalyses UDP-4-deoxy-4-formamido-beta-L-arabinose + di-trans,octa-cis-undecaprenyl phosphate = 4-deoxy-4-formamido-alpha-L-arabinopyranosyl di-trans,octa-cis-undecaprenyl phosphate + UDP. It participates in glycolipid biosynthesis; 4-amino-4-deoxy-alpha-L-arabinose undecaprenyl phosphate biosynthesis; 4-amino-4-deoxy-alpha-L-arabinose undecaprenyl phosphate from UDP-4-deoxy-4-formamido-beta-L-arabinose and undecaprenyl phosphate: step 1/2. Its pathway is bacterial outer membrane biogenesis; lipopolysaccharide biosynthesis. In terms of biological role, catalyzes the transfer of 4-deoxy-4-formamido-L-arabinose from UDP to undecaprenyl phosphate. The modified arabinose is attached to lipid A and is required for resistance to polymyxin and cationic antimicrobial peptides. The chain is Undecaprenyl-phosphate 4-deoxy-4-formamido-L-arabinose transferase from Pseudomonas fluorescens (strain SBW25).